The chain runs to 502 residues: Probable cytosol aminopeptidase (502 aa).

Mn(2+) is bound by residues lysine 269 and aspartate 274. Residue lysine 281 is part of the active site. Residues aspartate 292, aspartate 351, and glutamate 353 each coordinate Mn(2+). Arginine 355 is a catalytic residue.

The protein belongs to the peptidase M17 family. It depends on Mn(2+) as a cofactor.

The protein localises to the cytoplasm. The catalysed reaction is Release of an N-terminal amino acid, Xaa-|-Yaa-, in which Xaa is preferably Leu, but may be other amino acids including Pro although not Arg or Lys, and Yaa may be Pro. Amino acid amides and methyl esters are also readily hydrolyzed, but rates on arylamides are exceedingly low.. It catalyses the reaction Release of an N-terminal amino acid, preferentially leucine, but not glutamic or aspartic acids.. Functionally, presumably involved in the processing and regular turnover of intracellular proteins. Catalyzes the removal of unsubstituted N-terminal amino acids from various peptides. The sequence is that of Probable cytosol aminopeptidase from Shewanella sediminis (strain HAW-EB3).